Reading from the N-terminus, the 125-residue chain is Neuraminyllactose-binding hemagglutinin (125 aa).

The interval 92–97 is N-acetyl-neuraminyl-alpha(2,3)-lactose binding motif; the sequence is KRTIQK.

It localises to the cell outer membrane. The chain is Neuraminyllactose-binding hemagglutinin (hpaA) from Helicobacter pylori (Campylobacter pylori).